We begin with the raw amino-acid sequence, 311 residues long: 4-hydroxy-3-methylbut-2-enyl diphosphate reductase (311 aa).

Cys-12 serves as a coordination point for [4Fe-4S] cluster. His-41 and His-74 together coordinate (2E)-4-hydroxy-3-methylbut-2-enyl diphosphate. Residues His-41 and His-74 each coordinate dimethylallyl diphosphate. Residues His-41 and His-74 each contribute to the isopentenyl diphosphate site. Cys-96 is a [4Fe-4S] cluster binding site. His-124 lines the (2E)-4-hydroxy-3-methylbut-2-enyl diphosphate pocket. Position 124 (His-124) interacts with dimethylallyl diphosphate. Residue His-124 participates in isopentenyl diphosphate binding. The active-site Proton donor is Glu-126. Thr-167 serves as a coordination point for (2E)-4-hydroxy-3-methylbut-2-enyl diphosphate. Position 197 (Cys-197) interacts with [4Fe-4S] cluster. Residues Ser-225, Ser-226, Asn-227, and Ser-269 each contribute to the (2E)-4-hydroxy-3-methylbut-2-enyl diphosphate site. Ser-225, Ser-226, Asn-227, and Ser-269 together coordinate dimethylallyl diphosphate. Ser-225, Ser-226, Asn-227, and Ser-269 together coordinate isopentenyl diphosphate.

It belongs to the IspH family. It depends on [4Fe-4S] cluster as a cofactor.

The enzyme catalyses isopentenyl diphosphate + 2 oxidized [2Fe-2S]-[ferredoxin] + H2O = (2E)-4-hydroxy-3-methylbut-2-enyl diphosphate + 2 reduced [2Fe-2S]-[ferredoxin] + 2 H(+). The catalysed reaction is dimethylallyl diphosphate + 2 oxidized [2Fe-2S]-[ferredoxin] + H2O = (2E)-4-hydroxy-3-methylbut-2-enyl diphosphate + 2 reduced [2Fe-2S]-[ferredoxin] + 2 H(+). It functions in the pathway isoprenoid biosynthesis; dimethylallyl diphosphate biosynthesis; dimethylallyl diphosphate from (2E)-4-hydroxy-3-methylbutenyl diphosphate: step 1/1. It participates in isoprenoid biosynthesis; isopentenyl diphosphate biosynthesis via DXP pathway; isopentenyl diphosphate from 1-deoxy-D-xylulose 5-phosphate: step 6/6. Catalyzes the conversion of 1-hydroxy-2-methyl-2-(E)-butenyl 4-diphosphate (HMBPP) into a mixture of isopentenyl diphosphate (IPP) and dimethylallyl diphosphate (DMAPP). Acts in the terminal step of the DOXP/MEP pathway for isoprenoid precursor biosynthesis. The polypeptide is 4-hydroxy-3-methylbut-2-enyl diphosphate reductase (Aeromonas hydrophila subsp. hydrophila (strain ATCC 7966 / DSM 30187 / BCRC 13018 / CCUG 14551 / JCM 1027 / KCTC 2358 / NCIMB 9240 / NCTC 8049)).